The primary structure comprises 338 residues: tRNA pseudouridine synthase D (338 aa).

Catalysis depends on Asp-79, which acts as the Nucleophile. The region spanning 154–303 is the TRUD domain; sequence GVPNYFGEQR…EEAWRANILY (150 aa).

This sequence belongs to the pseudouridine synthase TruD family.

It carries out the reaction uridine(13) in tRNA = pseudouridine(13) in tRNA. Its function is as follows. Responsible for synthesis of pseudouridine from uracil-13 in transfer RNAs. This chain is tRNA pseudouridine synthase D, found in Legionella pneumophila (strain Lens).